The primary structure comprises 158 residues: UPF0260 protein RHECIAT_CH0001358 (158 aa).

Belongs to the UPF0260 family.

In Rhizobium etli (strain CIAT 652), this protein is UPF0260 protein RHECIAT_CH0001358.